A 464-amino-acid chain; its full sequence is Trigger factor (464 aa).

The PPIase FKBP-type domain maps to 162 to 243 (GDFVSIDLSA…VKSVKERELP (82 aa)). Residues 431–464 (IDTSEFFGKRPSGDGAADEDADQADESTTADAGE) form a disordered region. Residues 446–455 (AADEDADQAD) show a composition bias toward acidic residues.

It belongs to the FKBP-type PPIase family. Tig subfamily.

The protein localises to the cytoplasm. The enzyme catalyses [protein]-peptidylproline (omega=180) = [protein]-peptidylproline (omega=0). In terms of biological role, involved in protein export. Acts as a chaperone by maintaining the newly synthesized protein in an open conformation. Functions as a peptidyl-prolyl cis-trans isomerase. The protein is Trigger factor of Mycobacterium avium (strain 104).